The sequence spans 703 residues: FERM domain-containing protein 7 (703 aa).

The FERM domain maps to 2–282 (LHLKVQFLDD…EYHAFFRLSE (281 aa)). A coiled-coil region spans residues 525–552 (RNMRIKSLQQDLQELQEAMARTSGRSNI).

In terms of tissue distribution, in the developing cerebral cortex, strong expression is observed in the ventricular and intermediate zones at 13 and 17 dpc. At 17 dpc and P0, expression appears to be restricted to the cortical plate. In neonates, highly expressed in cortex, hippocampus, cerebellum, olfactory bulb and eye with little or no expression in liver, kidney, skeletal muscle or heart muscle (at protein level).

It localises to the cell projection. The protein resides in the neuron projection. It is found in the growth cone. In terms of biological role, plays a role in neurite development, may be through the activation of the GTPase RAC1. Plays a role in the control of eye movement and gaze stability. This is FERM domain-containing protein 7 from Mus musculus (Mouse).